The following is a 165-amino-acid chain: DELTA-actitoxin-Oor1a (165 aa).

The segment at 1–17 is N-terminal region; it reads ATFRVLAKVLAELGKVS. Phosphocholine is bound by residues Ser41, Val74, Ser92, Pro94, and Tyr125. A trp-rich region, which is important for the binding to lipid membrane region spans residues 92-107; the sequence is SVPYDYNLYSNWWNVK.

The protein belongs to the actinoporin family. Sea anemone subfamily. As to quaternary structure, octamer or nonamer in membranes. Monomer in the soluble state.

It localises to the secreted. The protein resides in the nematocyst. The protein localises to the target cell membrane. Pore-forming protein that forms cations-selective hydrophilic pores of around 1 nm and causes cardiac stimulation and cytolysis. Pore formation is a multi-step process that involves specific recognition of membrane sphingomyelin (but neither cholesterol nor phosphatidylcholine) using aromatic rich region and adjacent phosphocholine (POC) binding site, firm binding to the membrane (mainly driven by hydrophobic interactions) accompanied by the transfer of the N-terminal region to the lipid-water interface and finally pore formation after oligomerization of monomers. Cytolytic effects include red blood cells hemolysis, platelet aggregation and lysis, cytotoxic and cytostatic effects on fibroblasts. Lethality in mammals has been ascribed to severe vasospasm of coronary vessels, cardiac arrhythmia, and inotropic effects. In Oulactis orientalis (Japan anemone), this protein is DELTA-actitoxin-Oor1a.